Consider the following 343-residue polypeptide: Pyridoxal 5'-phosphate synthase subunit PDX1 (343 aa).

Residue Asp73 coordinates D-ribose 5-phosphate. Lys130 acts as the Schiff-base intermediate with D-ribose 5-phosphate in catalysis. Gly202 contributes to the D-ribose 5-phosphate binding site. Residue Gln214 participates in D-glyceraldehyde 3-phosphate binding. D-ribose 5-phosphate-binding positions include Gly263 and 284-285; that span reads GS.

Belongs to the PdxS/SNZ family.

It catalyses the reaction aldehydo-D-ribose 5-phosphate + D-glyceraldehyde 3-phosphate + L-glutamine = pyridoxal 5'-phosphate + L-glutamate + phosphate + 3 H2O + H(+). Its pathway is cofactor biosynthesis; pyridoxal 5'-phosphate biosynthesis. Its function is as follows. Catalyzes the formation of pyridoxal 5'-phosphate from ribose 5-phosphate (RBP), glyceraldehyde 3-phosphate (G3P) and ammonia. The ammonia is provided by PDX2. Can also use ribulose 5-phosphate and dihydroxyacetone phosphate as substrates, resulting from enzyme-catalyzed isomerization of RBP and G3P, respectively. Also plays an indirect role in resistance to singlet oxygen-generating photosensitizers. The polypeptide is Pyridoxal 5'-phosphate synthase subunit PDX1 (PDX1) (Cercospora nicotianae (Barn spot disease fungus)).